The primary structure comprises 737 residues: Prospero homeobox protein 1 (737 aa).

Positions M1–G28 are interaction with RORG. Over residues K103–D135 the composition is skewed to polar residues. Positions K103–M149 are disordered. Residues S177, S179, and S199 each carry the phosphoserine modification. A disordered region spans residues H178–Q242. The segment covering L213 to Q223 has biased composition (low complexity). Positions A227–Q242 are enriched in basic and acidic residues. Phosphoserine is present on residues S291 and S295. A compositionally biased stretch (basic and acidic residues) spans M320–G337. Disordered stretches follow at residues M320–E344 and K445–T476. Residue K324 forms a Glycyl lysine isopeptide (Lys-Gly) (interchain with G-Cter in SUMO2) linkage. Residues L464–T476 show a composition bias toward polar residues. Residues S511, S514, and S557 each carry the phosphoserine modification. The region spanning Q577–M635 is the Prospero-type homeo domain. Residues Q577–L735 form a homeo-Prospero region. Positions E636–L735 constitute a Prospero domain. Residues E723–N729 form an essential for nuclear localization, interaction with RORG, repression of RORG transcriptional activator activity region.

The protein belongs to the Prospero homeodomain family. As to quaternary structure, interacts with RORA and RORG (via AF-2 motif). As to expression, most actively expressed in the developing lens. Detected also in embryonic brain, lung, liver and kidney. In adult, it is more abundant in heart and liver than in brain, skeletal muscle, kidney and pancreas.

Its subcellular location is the nucleus. Transcription factor involved in developmental processes such as cell fate determination, gene transcriptional regulation and progenitor cell regulation in a number of organs. Plays a critical role in embryonic development and functions as a key regulatory protein in neurogenesis and the development of the heart, eye lens, liver, pancreas and the lymphatic system. Involved in the regulation of the circadian rhythm. Represses: transcription of the retinoid-related orphan receptor RORG, transcriptional activator activity of RORA and RORG and the expression of RORA/G-target genes including core clock components: BMAL1, NPAS2 and CRY1 and metabolic genes: AVPR1A and ELOVL3. The sequence is that of Prospero homeobox protein 1 (PROX1) from Homo sapiens (Human).